We begin with the raw amino-acid sequence, 307 residues long: Probable RuBisCO transcriptional regulator (307 aa).

The HTH lysR-type domain maps to 5–62; sequence FTLQQLRIFKAIASEKSFTQAAEILFVSQPSLSKQIKTLENRLGILLLNRTGNKILLT. The segment at residues 22-41 is a DNA-binding region (H-T-H motif); that stretch reads FTQAAEILFVSQPSLSKQIK.

It belongs to the LysR transcriptional regulatory family.

It localises to the plastid. The protein localises to the chloroplast. Functionally, trans-acting transcriptional regulator of RuBisCO genes (rbcL and rbcS) expression. This chain is Probable RuBisCO transcriptional regulator (rbcR-A), found in Thalassiosira pseudonana (Marine diatom).